The chain runs to 564 residues: Proline--tRNA ligase (564 aa).

Belongs to the class-II aminoacyl-tRNA synthetase family. ProS type 1 subfamily. As to quaternary structure, homodimer.

It is found in the cytoplasm. It catalyses the reaction tRNA(Pro) + L-proline + ATP = L-prolyl-tRNA(Pro) + AMP + diphosphate. Functionally, catalyzes the attachment of proline to tRNA(Pro) in a two-step reaction: proline is first activated by ATP to form Pro-AMP and then transferred to the acceptor end of tRNA(Pro). As ProRS can inadvertently accommodate and process non-cognate amino acids such as alanine and cysteine, to avoid such errors it has two additional distinct editing activities against alanine. One activity is designated as 'pretransfer' editing and involves the tRNA(Pro)-independent hydrolysis of activated Ala-AMP. The other activity is designated 'posttransfer' editing and involves deacylation of mischarged Ala-tRNA(Pro). The misacylated Cys-tRNA(Pro) is not edited by ProRS. The polypeptide is Proline--tRNA ligase (Xylella fastidiosa (strain 9a5c)).